A 502-amino-acid chain; its full sequence is Lysine--tRNA ligase (502 aa).

Mg(2+) is bound by residues glutamate 410 and glutamate 417.

Belongs to the class-II aminoacyl-tRNA synthetase family. As to quaternary structure, homodimer. Requires Mg(2+) as cofactor.

It is found in the cytoplasm. The enzyme catalyses tRNA(Lys) + L-lysine + ATP = L-lysyl-tRNA(Lys) + AMP + diphosphate. This Photobacterium profundum (strain SS9) protein is Lysine--tRNA ligase.